A 315-amino-acid polypeptide reads, in one-letter code: GTP cyclohydrolase MptA (315 aa).

This sequence belongs to the GTP cyclohydrolase IV family. Homodimer. Fe(2+) serves as cofactor.

The catalysed reaction is GTP + H2O = 7,8-dihydroneopterin 2',3'-cyclic phosphate + formate + diphosphate + H(+). Its pathway is cofactor biosynthesis; 5,6,7,8-tetrahydromethanopterin biosynthesis. Functionally, converts GTP to 7,8-dihydro-D-neopterin 2',3'-cyclic phosphate, the first intermediate in the biosynthesis of coenzyme methanopterin. The chain is GTP cyclohydrolase MptA from Methanococcus maripaludis (strain DSM 14266 / JCM 13030 / NBRC 101832 / S2 / LL).